The sequence spans 624 residues: Hemocyanin E chain (624 aa).

Positions 169, 173, 200, 320, 324, and 360 each coordinate Cu cation. N-linked (GlcNAc...) asparagine glycosylation occurs at Asn-445. Cysteines 529 and 577 form a disulfide.

The protein belongs to the tyrosinase family. Hemocyanin subfamily. In terms of assembly, tarantula hemocyanin is a 24-chain polymer with seven different chains identified. As to expression, hemolymph.

The protein resides in the secreted. The protein localises to the extracellular space. Hemocyanins are copper-containing oxygen carriers occurring freely dissolved in the hemolymph of many mollusks and arthropods. The protein is Hemocyanin E chain (HCE) of Aphonopelma sp. (American tarantula).